A 191-amino-acid polypeptide reads, in one-letter code: Elongation factor P (191 aa).

It belongs to the elongation factor P family.

The protein localises to the cytoplasm. It functions in the pathway protein biosynthesis; polypeptide chain elongation. Its function is as follows. Involved in peptide bond synthesis. Stimulates efficient translation and peptide-bond synthesis on native or reconstituted 70S ribosomes in vitro. Probably functions indirectly by altering the affinity of the ribosome for aminoacyl-tRNA, thus increasing their reactivity as acceptors for peptidyl transferase. In Bartonella henselae (strain ATCC 49882 / DSM 28221 / CCUG 30454 / Houston 1) (Rochalimaea henselae), this protein is Elongation factor P.